A 61-amino-acid chain; its full sequence is Small ribosomal subunit protein uS14 (61 aa).

The Zn(2+) site is built by cysteine 24, cysteine 27, cysteine 40, and cysteine 43.

Belongs to the universal ribosomal protein uS14 family. Zinc-binding uS14 subfamily. As to quaternary structure, part of the 30S ribosomal subunit. Contacts proteins S3 and S10. It depends on Zn(2+) as a cofactor.

In terms of biological role, binds 16S rRNA, required for the assembly of 30S particles and may also be responsible for determining the conformation of the 16S rRNA at the A site. The protein is Small ribosomal subunit protein uS14 of Endomicrobium trichonymphae.